Consider the following 134-residue polypeptide: Small ribosomal subunit protein bS16 (134 aa).

Residues 80 to 134 (GLAKRPTRSNPTKGEPGKKAQERLAMAKQAEEEAAAKAAEAAAAAAAPAEEAASE) are disordered. The segment covering 115-134 (AKAAEAAAAAAAPAEEAASE) has biased composition (low complexity).

Belongs to the bacterial ribosomal protein bS16 family.

This chain is Small ribosomal subunit protein bS16, found in Brucella anthropi (strain ATCC 49188 / DSM 6882 / CCUG 24695 / JCM 21032 / LMG 3331 / NBRC 15819 / NCTC 12168 / Alc 37) (Ochrobactrum anthropi).